The sequence spans 122 residues: Large ribosomal subunit protein uL14 (122 aa).

The protein belongs to the universal ribosomal protein uL14 family. As to quaternary structure, part of the 50S ribosomal subunit. Forms a cluster with proteins L3 and L19. In the 70S ribosome, L14 and L19 interact and together make contacts with the 16S rRNA in bridges B5 and B8.

Its function is as follows. Binds to 23S rRNA. Forms part of two intersubunit bridges in the 70S ribosome. This Desulfatibacillum aliphaticivorans protein is Large ribosomal subunit protein uL14.